The sequence spans 329 residues: Thioredoxin-like fold domain-containing protein MRL7L homolog, chloroplastic (329 aa).

The N-terminal 46 residues, 1 to 46 (MALQSCCSSSASVPATCSALCLAEATRAASLFVRPRAAARRLVLAR), are a transit peptide targeting the chloroplast. The interval 58-91 (AVQLVLGGRARDDGSESESSDDEDDDEPMQMTDE) is disordered. A compositionally biased stretch (acidic residues) spans 72–85 (SESESSDDEDDDEP).

The protein localises to the plastid. It localises to the chloroplast stroma. In terms of biological role, plays an essential role in early steps of chloroplast development. Involved in the regulation of plastid gene expression. Required for the proper function of the plastid transcriptional machinery and protein accumulation in thylakoid membranes. May function as molecular chaperone to ensure proper organization of the nucleoids in chloroplasts. The chain is Thioredoxin-like fold domain-containing protein MRL7L homolog, chloroplastic from Oryza sativa subsp. japonica (Rice).